The primary structure comprises 140 residues: Arsenate-mycothiol transferase ArsC1 (140 aa).

Belongs to the low molecular weight phosphotyrosine protein phosphatase family.

The protein resides in the cytoplasm. It carries out the reaction mycothiol + arsenate = arseno-mycothiol + H2O. Functionally, involved in defense against toxic arsenate. Involved in the mycothiol/myoredoxin redox pathway which uses a mycothioltransferase mechanism; facilitates adduct formation between arsenate and mycothiol. This chain is Arsenate-mycothiol transferase ArsC1 (arsC1), found in Corynebacterium glutamicum (strain ATCC 13032 / K051).